Reading from the N-terminus, the 398-residue chain is Enoyl-[acyl-carrier-protein] reductase [NADH] (398 aa).

Residues 48-53 (GSSTGY), 74-75 (FE), 111-112 (DA), and 139-140 (LA) each bind NAD(+). Tyr-225 lines the substrate pocket. Tyr-235 acts as the Proton donor in catalysis. Residues Lys-244 and 273–275 (VVT) contribute to the NAD(+) site.

It belongs to the TER reductase family. As to quaternary structure, monomer.

The catalysed reaction is a 2,3-saturated acyl-[ACP] + NAD(+) = a (2E)-enoyl-[ACP] + NADH + H(+). It functions in the pathway lipid metabolism; fatty acid biosynthesis. In terms of biological role, involved in the final reduction of the elongation cycle of fatty acid synthesis (FAS II). Catalyzes the reduction of a carbon-carbon double bond in an enoyl moiety that is covalently linked to an acyl carrier protein (ACP). The protein is Enoyl-[acyl-carrier-protein] reductase [NADH] of Pseudomonas aeruginosa (strain UCBPP-PA14).